Reading from the N-terminus, the 175-residue chain is Large ribosomal subunit protein uL10 (175 aa).

The protein belongs to the universal ribosomal protein uL10 family. As to quaternary structure, part of the ribosomal stalk of the 50S ribosomal subunit. The N-terminus interacts with L11 and the large rRNA to form the base of the stalk. The C-terminus forms an elongated spine to which L12 dimers bind in a sequential fashion forming a multimeric L10(L12)X complex.

Forms part of the ribosomal stalk, playing a central role in the interaction of the ribosome with GTP-bound translation factors. The sequence is that of Large ribosomal subunit protein uL10 from Thermobifida fusca (strain YX).